Reading from the N-terminus, the 21-residue chain is S-layer protein 2 (21 aa).

Its subcellular location is the secreted. The protein localises to the cell wall. It is found in the S-layer. Functionally, the S-layer is a paracrystalline mono-layered assembly of proteins which coat the surface of bacteria. The chain is S-layer protein 2 from Bacillus thuringiensis subsp. konkukian.